The primary structure comprises 458 residues: Exodeoxyribonuclease 7 large subunit (458 aa).

The protein belongs to the XseA family. As to quaternary structure, heterooligomer composed of large and small subunits.

Its subcellular location is the cytoplasm. It catalyses the reaction Exonucleolytic cleavage in either 5'- to 3'- or 3'- to 5'-direction to yield nucleoside 5'-phosphates.. In terms of biological role, bidirectionally degrades single-stranded DNA into large acid-insoluble oligonucleotides, which are then degraded further into small acid-soluble oligonucleotides. The polypeptide is Exodeoxyribonuclease 7 large subunit (Escherichia coli O81 (strain ED1a)).